The chain runs to 359 residues: 3-dehydroquinate synthase (359 aa).

NAD(+)-binding positions include 71–76 (DGEQYK), 105–109 (GVIGD), 129–130 (TT), lysine 142, lysine 151, and 169–172 (CLST). Zn(2+) is bound by residues glutamate 184, histidine 247, and histidine 264.

This sequence belongs to the sugar phosphate cyclases superfamily. Dehydroquinate synthase family. It depends on Co(2+) as a cofactor. Zn(2+) is required as a cofactor. The cofactor is NAD(+).

It is found in the cytoplasm. It catalyses the reaction 7-phospho-2-dehydro-3-deoxy-D-arabino-heptonate = 3-dehydroquinate + phosphate. It participates in metabolic intermediate biosynthesis; chorismate biosynthesis; chorismate from D-erythrose 4-phosphate and phosphoenolpyruvate: step 2/7. Its function is as follows. Catalyzes the conversion of 3-deoxy-D-arabino-heptulosonate 7-phosphate (DAHP) to dehydroquinate (DHQ). The protein is 3-dehydroquinate synthase of Shewanella halifaxensis (strain HAW-EB4).